Reading from the N-terminus, the 650-residue chain is ATP-binding cassette sub-family G member 3 (650 aa).

At 1-387 the chain is on the cytoplasmic side; sequence MASNNDPTVI…KNFKGFPWVT (387 aa). In terms of domain architecture, ABC transporter spans 37 to 279; sequence LSFHNISYQE…FRSAGYNYES (243 aa). Residues 381-644 form the ABC transmembrane type-2 domain; that stretch reads KGFPWVTVIQ…TITYVQLLQV (264 aa). The helical transmembrane segment at 388–408 threads the bilayer; it reads VIQAIITVILATAVGTAFRVL. Topologically, residues 409 to 420 are extracellular; that stretch reads KNDCIEVQMRAG. The helical transmembrane segment at 421 to 441 threads the bilayer; that stretch reads LLYLLTIFQCITSVSAGELFV. The Cytoplasmic segment spans residues 442 to 469; the sequence is IDRVRFLHEHTSGYYRVSSYFFGKLLAE. A helical membrane pass occupies residues 470-490; the sequence is LIPRRLLPSTVFSLITYVIAG. Residues 491 to 498 are Extracellular-facing; the sequence is VKMSMKCF. Residues 499–519 form a helical membrane-spanning segment; sequence FTMICTIMVLAYSASSLPLSI. Residues 520–527 lie on the Cytoplasmic side of the membrane; that stretch reads GAGENAVA. A helical transmembrane segment spans residues 528 to 548; that stretch reads VPTLLVTIYFVFMLFFSGLSL. Residues 549-623 are Extracellular-facing; the sequence is YSGSFLPKLS…LSSWGFWENH (75 aa). Residues 624–644 traverse the membrane as a helical segment; sequence LALVCTMIILLTITYVQLLQV. Residues 645–648 lie on the Cytoplasmic side of the membrane; sequence KNIR.

This sequence belongs to the ABC transporter superfamily. ABCG family. Eye pigment precursor importer (TC 3.A.1.204) subfamily. In terms of assembly, may dimerize with another subunit to form a functional transporter. As to expression, highest levels of expression in thymus and spleen. Detected in lung and small intestine.

The protein localises to the membrane. The sequence is that of ATP-binding cassette sub-family G member 3 (Abcg3) from Mus musculus (Mouse).